Reading from the N-terminus, the 451-residue chain is mRNA cleavage and polyadenylation factor CLP1 (451 aa).

Residues E33, K72, and 133-138 (NTGKTA) each bind ATP.

This sequence belongs to the Clp1 family. Clp1 subfamily. In terms of assembly, component of a pre-mRNA cleavage factor complex. Interacts directly with PCF11.

Its subcellular location is the nucleus. Required for endonucleolytic cleavage during polyadenylation-dependent pre-mRNA 3'-end formation. This chain is mRNA cleavage and polyadenylation factor CLP1, found in Vanderwaltozyma polyspora (strain ATCC 22028 / DSM 70294 / BCRC 21397 / CBS 2163 / NBRC 10782 / NRRL Y-8283 / UCD 57-17) (Kluyveromyces polysporus).